Here is a 425-residue protein sequence, read N- to C-terminus: Serine--tRNA ligase (425 aa).

Threonine 231–glutamate 233 contacts L-serine. Residue arginine 262–glutamate 264 coordinates ATP. Glutamate 285 is an L-serine binding site. Glutamate 349–serine 352 provides a ligand contact to ATP. Serine 385 is an L-serine binding site.

Belongs to the class-II aminoacyl-tRNA synthetase family. Type-1 seryl-tRNA synthetase subfamily. As to quaternary structure, homodimer. The tRNA molecule binds across the dimer.

The protein resides in the cytoplasm. The enzyme catalyses tRNA(Ser) + L-serine + ATP = L-seryl-tRNA(Ser) + AMP + diphosphate + H(+). The catalysed reaction is tRNA(Sec) + L-serine + ATP = L-seryl-tRNA(Sec) + AMP + diphosphate + H(+). Its pathway is aminoacyl-tRNA biosynthesis; selenocysteinyl-tRNA(Sec) biosynthesis; L-seryl-tRNA(Sec) from L-serine and tRNA(Sec): step 1/1. Its function is as follows. Catalyzes the attachment of serine to tRNA(Ser). Is also able to aminoacylate tRNA(Sec) with serine, to form the misacylated tRNA L-seryl-tRNA(Sec), which will be further converted into selenocysteinyl-tRNA(Sec). The polypeptide is Serine--tRNA ligase (Bacillus subtilis (strain 168)).